The following is a 455-amino-acid chain: Mu-like prophage FluMu DNA circularization protein (455 aa).

Residues 368 to 387 (VILDNADAEQWTSYAALEQY) constitute a DNA-binding region (H-T-H motif).

This sequence to phage Mu protein N.

This Haemophilus influenzae (strain ATCC 51907 / DSM 11121 / KW20 / Rd) protein is Mu-like prophage FluMu DNA circularization protein.